The primary structure comprises 401 residues: Phosphoglycerate kinase (401 aa).

Substrate is bound by residues 21–23, arginine 36, 59–62, arginine 119, and arginine 160; these read DFN and HLGR. ATP is bound by residues lysine 212, glutamate 330, and 357–360; that span reads GGDS.

Belongs to the phosphoglycerate kinase family. In terms of assembly, monomer.

The protein resides in the cytoplasm. The enzyme catalyses (2R)-3-phosphoglycerate + ATP = (2R)-3-phospho-glyceroyl phosphate + ADP. It functions in the pathway carbohydrate degradation; glycolysis; pyruvate from D-glyceraldehyde 3-phosphate: step 2/5. The polypeptide is Phosphoglycerate kinase (Limosilactobacillus fermentum (strain NBRC 3956 / LMG 18251) (Lactobacillus fermentum)).